The chain runs to 538 residues: MTNQQHDHDFDHDRRSFASRTPVNNNPDKVVYRRGFVTRHQVTGWRFVMRRIAAGIALHDTRMLVDPLRTQSRAVLMGVLIVITGLIGSFVFSLIRPNGQAGSNAVLADRSTAALYVRVGEQLHPVLNLTSARLIVGRPVSPTTVKSTELDQFPRGNLIGIPGAPERMVQNTSTDANWTVCDGLNAPSRGGADGVGVTVIAGPLEDTGARAAALGPGQAVLVDSGAGTWLLWDGKRSPIDLADHAVTSGLGLGADVPAPRIIASGLFNAIPEAPPLTAPIIPDAGNPASFGVPAPIGAVVSSYALKDSGKTISDTVQYYAVLPDGLQQISPVLAAILRNNNSYGLQQPPRLGADEVAKLPVSRVLDTRRYPSEPVSLVDVTRDPVTCAYWSKPVGAATSSLTLLAGSALPVPDAVHTVELVGAGNGGVATRVALAAGTGYFTQTVGGGPDAPGAGSLFWVSDTGVRYGIDNEPQGVAGGGKAVEALGLNPPPVPIPWSVLSLFVPGPTLSRADALLAHDTLVPDSRPARPVSAEGGYR.

The segment covering 1–16 (MTNQQHDHDFDHDRRS) has biased composition (basic and acidic residues). A disordered region spans residues 1–25 (MTNQQHDHDFDHDRRSFASRTPVNN). Residues 75–95 (VLMGVLIVITGLIGSFVFSLI) traverse the membrane as a helical segment.

Belongs to the EccB family. In terms of assembly, part of the ESX-3 / type VII secretion system (T7SS), which is composed of cytosolic and membrane components. The ESX-3 membrane complex is composed of EccB3, EccC3, EccD3 and EccE3.

The protein localises to the cell inner membrane. An ATPase. Part of the ESX-3 specialized secretion system, which is important for iron and zinc uptake or homeostasis. The polypeptide is ESX-3 secretion system ATPase EccB3 (Mycobacterium tuberculosis (strain CDC 1551 / Oshkosh)).